The following is a 654-amino-acid chain: Amyloid beta precursor like protein 1 (654 aa).

Residues 1-38 (MGPTSPAARGQGRRWRPPPLPLLLPLSLLLLRAQLAVG) form the signal peptide. Residues 39–584 (NLAVGSPSAA…APSGTGVSRE (546 aa)) are Extracellular-facing. Positions 50 to 146 (APGSAQVAGL…PFHCLPGEFV (97 aa)) are GFLD subdomain. Positions 50-212 (APGSAQVAGL…RGVEYVCCPP (163 aa)) constitute an E1 domain. 6 disulfide bridges follow: C60/C84, C95/C140, C120/C128, C156/C210, C167/C197, and C181/C209. The segment at 154-212 (EGCRFLHQERMDQCESSTRRHQEAQEACSSQGLILHGSGMLLPCGSDRFRGVEYVCCPP) is cuBD subdomain. H174 contributes to the Cu(2+) binding site. E206, C209, and C210 together coordinate Zn(2+). Residues 214–297 (ATPNPSGMAA…VTPTPRPTDG (84 aa)) form a disordered region. Residues 262-272 (QAEEEEEEEEE) are compositionally biased toward acidic residues. The E2 domain maps to 297–488 (GVDVYFGMPG…QELRPQIQEL (192 aa)). 2 heparin-binding regions span residues 314-346 (FLRA…SKNL) and 414-445 (LMAL…DPEK). The interval 446–463 (AQQMRFQVQTHLQVIEER) is collagen-binding. N465 carries N-linked (GlcNAc...) asparagine glycosylation. A disordered region spans residues 497–580 (SELDASVPGS…RDELAPSGTG (84 aa)). The segment covering 508-523 (SEDKGSLQPPESKDDP) has biased composition (basic and acidic residues). Positions 529-539 (KGSTDQESSSS) are enriched in polar residues. A glycan (N-linked (GlcNAc...) asparagine) is linked at N555. H565 contributes to the Cu(2+) binding site. H565 provides a ligand contact to Zn(2+). The chain crosses the membrane as a helical span at residues 585–607 (ALSGLLIMGAGGGSLIVLSLLLL). Positions 608–619 (RKKKPYGTISHG) match the Basolateral sorting signal motif. Residues 608–654 (RKKKPYGTISHGVVEVDPMLTLEEQQLRELQRHGYENPTYRFLEERP) lie on the Cytoplasmic side of the membrane. Residues 636–652 (ELQRHGYENPTYRFLEE) form an interaction with DAB1 region. The segment at 640 to 654 (HGYENPTYRFLEERP) is interaction with DAB2. The NPXY motif; contains endocytosis signal signature appears at 644-647 (NPTY).

This sequence belongs to the APP family. In terms of assembly, monomer and homodimer. Heparin binding promotes homodimerization. Binds, via its C-terminus, to the PID domain of several cytoplasmic proteins, including APBB and APBA family members, MAPK8IP1 and DAB1. Binding to Dab1 inhibits its serine phosphorylation. Interacts with CPEB1. Interacts (via NPXY motif) with DAB2 (via PID domain); the interaction is impaired by tyrosine phosphorylation of the NPXY motif. Interacts (via NPXY motif) with DAB1. In terms of processing, proteolytically cleaved by caspases during neuronal apoptosis. Cleaved, in vitro, at Asp-624 by caspase-3. N- and O-glycosylated.

The protein localises to the cell membrane. It is found in the cytoplasm. In terms of biological role, may play a role in postsynaptic function. The C-terminal gamma-secretase processed fragment, ALID1, activates transcription activation through APBB1 (Fe65) binding. Couples to JIP signal transduction through C-terminal binding. May interact with cellular G-protein signaling pathways. Can regulate neurite outgrowth through binding to components of the extracellular matrix such as heparin and collagen I. Functionally, the gamma-CTF peptide, C30, is a potent enhancer of neuronal apoptosis. This Mus musculus (Mouse) protein is Amyloid beta precursor like protein 1 (Aplp1).